Reading from the N-terminus, the 143-residue chain is UPF0299 membrane protein CGSHiEE_04225 (143 aa).

4 consecutive transmembrane segments (helical) span residues 1–21 (MIQK…MLSL), 33–52 (VPGS…TRVI), 60–80 (GASL…VGII), and 92–112 (ILLV…GFLG).

This sequence belongs to the UPF0299 family.

The protein localises to the cell inner membrane. The chain is UPF0299 membrane protein CGSHiEE_04225 from Haemophilus influenzae (strain PittEE).